A 1065-amino-acid polypeptide reads, in one-letter code: Putative guanine nucleotide-exchange factor SED4 (1065 aa).

The Cytoplasmic segment spans residues 1 to 346 (MSGNSANYDV…SSSILRNIWK (346 aa)). Position 65 is a phosphoserine (serine 65). WD repeat units lie at residues 259-298 (FDLNGITSMDVSPNKKFVALSSNDNLVAIVSVEKLKLVQL) and 302-341 (VHESTITKVTFSPDSRYLASTSMGNTINVLKLSGTSSSIL). Residues 347 to 365 (FFLNFVLLVVLAGAIQLGY) traverse the membrane as a helical; Signal-anchor for type II membrane protein segment. Residues 366–1065 (KHNVHGFIYK…VNYAGLHDEL (700 aa)) lie on the Lumenal side of the membrane. Asparagine 388 is a glycosylation site (N-linked (GlcNAc...) asparagine). Disordered stretches follow at residues 458–477 (TSADIPTSASSSSSSSSSSF), 482–520 (VTNEPIVSSPTSEITKPLASPTEPNIVEKPSLPLNSESI), and 551–625 (QSES…SFLD). Residues 465-476 (SASSSSSSSSSS) show a composition bias toward low complexity. Residues 482 to 495 (VTNEPIVSSPTSEI) are compositionally biased toward polar residues. Positions 568-621 (STESPSLSHMPSSSSSSLSLSSSLTTSPTTALSTSTATAVTTTQTNPTNDAANT) are enriched in low complexity. The N-linked (GlcNAc...) asparagine glycan is linked to asparagine 620. Repeat copies occupy residues 824–833 (IDNSEYTSVL), 834–843 (ADNLEPTSVL), 844–853 (ADNSEPTSVL), and 854–863 (ADSSEPTSVF). The 4 X 10 AA tandem repeats stretch occupies residues 824-863 (IDNSEYTSVLADNLEPTSVLADNSEPTSVLADSSEPTSVF). Asparagine 1039 carries an N-linked (GlcNAc...) asparagine glycan. Residues 1062–1065 (HDEL) carry the Prevents secretion from ER motif.

The protein belongs to the WD repeat SEC12 family.

The protein resides in the endoplasmic reticulum membrane. Its subcellular location is the golgi apparatus membrane. Putative guanine nucleotide-exchange factor (GEF) involved in the formation or budding of transport vesicles from the ER. Positive regulator of SAR1 probably through inhibition of the GTPase activation by SEC23. This is Putative guanine nucleotide-exchange factor SED4 (SED4) from Saccharomyces cerevisiae (strain ATCC 204508 / S288c) (Baker's yeast).